Here is a 455-residue protein sequence, read N- to C-terminus: N(6)-adenosine-methyltransferase non-catalytic subunit METTL14 (455 aa).

The tract at residues 21–96 (QQLGAESPDS…QHQEESGPYE (76 aa)) is disordered. The segment covering 37 to 51 (SKDEQKEIEETRETC) has biased composition (basic and acidic residues). The segment covering 69 to 82 (EGEDPEEDVEEQKE) has biased composition (acidic residues). Interaction with METTL3 regions lie at residues 134–135 (RD) and 236–237 (SG). The segment at 244 to 253 (RMCLRKWGFR) is positively charged region required for RNA-binding. Interaction with METTL3 stretches follow at residues 254–257 (RCED) and 277–286 (KAVFQRTKEH). The segment at 296-297 (RR) is positively charged region required for RNA-binding. An interaction with METTL3 region spans residues 307-311 (NVDID). The interval 392–455 (ERLRPKSPPP…GGPHRGFPPR (64 aa)) is disordered. Gly residues predominate over residues 407–421 (RGGGAPRGGRGGPAA). Residues 423–441 (RGDRGRERNRPNFRGDRGG) are compositionally biased toward basic and acidic residues.

This sequence belongs to the MT-A70-like family. As to quaternary structure, heterodimer; heterodimerizes with mettl3 to form an antiparallel heterodimer that constitutes an active methyltransferase. Component of the WMM complex, a N6-methyltransferase complex composed of a catalytic subcomplex, named MAC, and of an associated subcomplex, named MACOM. The MAC subcomplex is composed of mettl3 and mettl14.

It is found in the nucleus. Functionally, the METTL3-METTL14 heterodimer forms a N6-methyltransferase complex that methylates adenosine residues at the N(6) position of some mRNAs and regulates the circadian clock, differentiation of embryonic stem cells and cortical neurogenesis. In the heterodimer formed with mettl3, mettl14 constitutes the RNA-binding scaffold that recognizes the substrate rather than the catalytic core. N6-methyladenosine (m6A), which takes place at the 5'-[AG]GAC-3' consensus sites of some mRNAs, plays a role in mRNA stability and processing. In Danio rerio (Zebrafish), this protein is N(6)-adenosine-methyltransferase non-catalytic subunit METTL14 (mettl14).